The chain runs to 120 residues: ATP synthase subunit a (120 aa).

The next 4 membrane-spanning stretches (helical) occupy residues 2–22, 29–49, 59–79, and 94–116; these read FFYSLFKGTYNFIYVTIYSYL, FFPFFFYLFLFICLSNLVGIV, LNITFSLSFLVWWATCLLGFY, and IPFVLVPFWALIEVISFIFRSVG.

Belongs to the ATPase A chain family. F-type ATPases have 2 components, CF(1) - the catalytic core - and CF(0) - the membrane proton channel. CF(1) has five subunits: alpha(3), beta(3), gamma(1), delta(1), epsilon(1). CF(0) has three main subunits: a, b and c.

It localises to the mitochondrion inner membrane. In terms of biological role, mitochondrial membrane ATP synthase (F(1)F(0) ATP synthase or Complex V) produces ATP from ADP in the presence of a proton gradient across the membrane which is generated by electron transport complexes of the respiratory chain. F-type ATPases consist of two structural domains, F(1) - containing the extramembraneous catalytic core and F(0) - containing the membrane proton channel, linked together by a central stalk and a peripheral stalk. During catalysis, ATP synthesis in the catalytic domain of F(1) is coupled via a rotary mechanism of the central stalk subunits to proton translocation. Key component of the proton channel; it may play a direct role in the translocation of protons across the membrane. This Naegleria fowleri (Brain eating amoeba) protein is ATP synthase subunit a (ATP6).